The following is a 147-amino-acid chain: Hemoglobin subunit gamma (147 aa).

The Globin domain maps to 3-147; it reads HFTAEEKAAI…VATALAHKYH (145 aa). Residues His-64 and His-93 each coordinate heme b.

This sequence belongs to the globin family. In terms of assembly, heterotetramer of two alpha chains and two gamma chains. Red blood cells.

Its function is as follows. This protein functions as an embryonic globin, but the gene structure and chromosomal location resemble more closely the human gamma chain gene, which codes for a fetal globin. This is Hemoglobin subunit gamma (HBG) from Oryctolagus cuniculus (Rabbit).